Reading from the N-terminus, the 142-residue chain is Hemoglobin subunit alpha-A (142 aa).

A Globin domain is found at 2–142 (VLSAADKTNV…VGAVLTAKYR (141 aa)). H59 contributes to the O2 binding site. H88 contributes to the heme b binding site.

The protein belongs to the globin family. Heterotetramer of two alpha chains and two beta chains. As to expression, red blood cells.

In terms of biological role, involved in oxygen transport from the lung to the various peripheral tissues. The protein is Hemoglobin subunit alpha-A (HBAA) of Anas platyrhynchos (Mallard).